Here is a 120-residue protein sequence, read N- to C-terminus: Dihydroneopterin aldolase (120 aa).

Substrate-binding positions include E21, Y53, and 72–73 (VE). Catalysis depends on K99, which acts as the Proton donor/acceptor.

Belongs to the DHNA family.

It carries out the reaction 7,8-dihydroneopterin = 6-hydroxymethyl-7,8-dihydropterin + glycolaldehyde. The protein operates within cofactor biosynthesis; tetrahydrofolate biosynthesis; 2-amino-4-hydroxy-6-hydroxymethyl-7,8-dihydropteridine diphosphate from 7,8-dihydroneopterin triphosphate: step 3/4. Its function is as follows. Catalyzes the conversion of 7,8-dihydroneopterin to 6-hydroxymethyl-7,8-dihydropterin. This Bacillus subtilis (strain 168) protein is Dihydroneopterin aldolase (folB).